The sequence spans 161 residues: SsrA-binding protein (161 aa).

A disordered region spans residues 140 to 161 (KRESIKERDWKRDKQRLLKDRG).

It belongs to the SmpB family.

The protein localises to the cytoplasm. Functionally, required for rescue of stalled ribosomes mediated by trans-translation. Binds to transfer-messenger RNA (tmRNA), required for stable association of tmRNA with ribosomes. tmRNA and SmpB together mimic tRNA shape, replacing the anticodon stem-loop with SmpB. tmRNA is encoded by the ssrA gene; the 2 termini fold to resemble tRNA(Ala) and it encodes a 'tag peptide', a short internal open reading frame. During trans-translation Ala-aminoacylated tmRNA acts like a tRNA, entering the A-site of stalled ribosomes, displacing the stalled mRNA. The ribosome then switches to translate the ORF on the tmRNA; the nascent peptide is terminated with the 'tag peptide' encoded by the tmRNA and targeted for degradation. The ribosome is freed to recommence translation, which seems to be the essential function of trans-translation. The polypeptide is SsrA-binding protein (Sphingopyxis alaskensis (strain DSM 13593 / LMG 18877 / RB2256) (Sphingomonas alaskensis)).